A 325-amino-acid polypeptide reads, in one-letter code: Putative HTH-type transcriptional regulatory protein HQ_3058A (325 aa).

Residues Leu-132–Leu-186 enclose the HTH cro/C1-type domain. The H-T-H motif DNA-binding region spans Leu-143 to Asp-162. Residues Met-189–Asp-211 form a disordered region. Residues Pro-200–Asp-211 show a composition bias toward acidic residues.

The protein is Putative HTH-type transcriptional regulatory protein HQ_3058A of Haloquadratum walsbyi (strain DSM 16790 / HBSQ001).